A 244-amino-acid chain; its full sequence is MADRSVRPLRHLVHAVTGGQPPSEAQVRQAAWIARCVGRGGSAPLHRDDVSALAETLQVKEFAPGAVVFHADQTADGVWIVRHGLIELAVGSRRRRAVVNILHPGDVDGDIPLLLEMPMVYTGRALTQATCLFLDRQAFERLLATHPAIARRWLSSVAQRVSTAQIRLMGMLGRPLPAQVAQLLLDEAIDARIELAQRTLAAMLGAQRPSINKILKEFERDRLITVGYAVIEITDQHGLRARAQ.

41-160 is a binding site for a nucleoside 3',5'-cyclic phosphate; the sequence is GSAPLHRDDV…RRWLSSVAQR (120 aa). Positions 174-237 constitute an HTH crp-type domain; that stretch reads RPLPAQVAQL…YAVIEITDQH (64 aa). A DNA-binding region (H-T-H motif) is located at residues 197-216; it reads QRTLAAMLGAQRPSINKILK.

In terms of biological role, positively regulates the expression of at least groEL2. This is HTH-type transcriptional regulator Cmr (cmr) from Mycobacterium tuberculosis (strain CDC 1551 / Oshkosh).